A 366-amino-acid chain; its full sequence is MAGRLWGSPGGTPKGNGSSALLNVSQAAPGAGDGVRPRPSWLAATLASILIFTIVVDIVGNLLVVLSVYRNKKLRNAGNVFVVSLAVADLLVAVYPYPLALASIVNNGWSLSSLHCQLSGFLMGLSVIGSVFSITGIAINRYCCICHSLRYGKLYSGTNSLCYVFLIWTLTLVAIVPNLCVGTLQYDPRIYSCTFTQSVSSAYTIAVVVFHFIVPMLVVVFCYLRIWALVLQVRWKVKPDNKPKLKPQDFRNFVTMFVVFVLFAICWAPLNFIGLVVASDPASMAPRIPEWLFVASYYMAYFNSCLNAIIYGLLNQNFRQEYRKIIVSLCTTKMFFVDSSNHVADRIKRKPSPLIANHNLIKVDSV.

Residues 1 to 45 lie on the Extracellular side of the membrane; it reads MAGRLWGSPGGTPKGNGSSALLNVSQAAPGAGDGVRPRPSWLAAT. N-linked (GlcNAc...) asparagine glycans are attached at residues Asn-16 and Asn-23. A helical membrane pass occupies residues 46 to 66; sequence LASILIFTIVVDIVGNLLVVL. Residues 67–79 are Cytoplasmic-facing; sequence SVYRNKKLRNAGN. Residues 80–100 form a helical membrane-spanning segment; the sequence is VFVVSLAVADLLVAVYPYPLA. Over 101–118 the chain is Extracellular; it reads LASIVNNGWSLSSLHCQL. An intrachain disulfide couples Cys-116 to Cys-193. Residues 119-139 traverse the membrane as a helical segment; that stretch reads SGFLMGLSVIGSVFSITGIAI. Residues 140 to 158 are Cytoplasmic-facing; that stretch reads NRYCCICHSLRYGKLYSGT. The helical transmembrane segment at 159–179 threads the bilayer; it reads NSLCYVFLIWTLTLVAIVPNL. At 180 to 203 the chain is on the extracellular side; sequence CVGTLQYDPRIYSCTFTQSVSSAY. Residues 204-224 form a helical membrane-spanning segment; sequence TIAVVVFHFIVPMLVVVFCYL. At 225–256 the chain is on the cytoplasmic side; sequence RIWALVLQVRWKVKPDNKPKLKPQDFRNFVTM. The helical transmembrane segment at 257 to 277 threads the bilayer; that stretch reads FVVFVLFAICWAPLNFIGLVV. The Extracellular segment spans residues 278-290; the sequence is ASDPASMAPRIPE. Residues 291 to 311 traverse the membrane as a helical segment; sequence WLFVASYYMAYFNSCLNAIIY. The Cytoplasmic segment spans residues 312–366; the sequence is GLLNQNFRQEYRKIIVSLCTTKMFFVDSSNHVADRIKRKPSPLIANHNLIKVDSV.

The protein belongs to the G-protein coupled receptor 1 family.

The protein localises to the cell membrane. Its function is as follows. High affinity receptor for melatonin. Likely to mediate the reproductive and circadian actions of melatonin. The activity of this receptor is mediated by pertussis toxin sensitive G proteins that inhibit adenylate cyclase activity. Possibly involved in sleep induction, by melatonin activation of the potassium channel KCNMA1/BK and the dissociation of G-beta and G-gamma subunits, thereby decreasing synaptic transmission. This chain is Melatonin receptor type 1A (MTNR1A), found in Ovis aries (Sheep).